Here is a 432-residue protein sequence, read N- to C-terminus: Transcriptional adapter 3-B (432 aa).

Disordered stretches follow at residues 90 to 124 and 275 to 315; these read HELGTPIKHSKPKKQKLDGKGSHASGPGPGRPKSR and SPVE…KSLE. The segment covering 293–305 has biased composition (polar residues); sequence DGASTSPRSQNKP. Residues 335 to 398 adopt a coiled-coil conformation; it reads ADDSEDEVLA…NEVMDAFRKI (64 aa).

The protein belongs to the NGG1 family.

Its subcellular location is the nucleus. In terms of biological role, functions as a component of the PCAF complex. The PCAF complex is capable of efficiently acetylating histones in a nucleosomal context. The chain is Transcriptional adapter 3-B (tada3-b) from Xenopus laevis (African clawed frog).